We begin with the raw amino-acid sequence, 110 residues long: Acid stress chaperone HdeA (110 aa).

A signal peptide spans 1–21; that stretch reads MKKVLGVILGGLLLLPVVSNA. The cysteines at positions 39 and 87 are disulfide-linked.

This sequence belongs to the HdeA family.

It localises to the periplasm. Required for optimal acid stress protection. Exhibits a chaperone-like activity only at low pH by suppressing non-specifically the aggregation of denaturated periplasmic proteins. This chain is Acid stress chaperone HdeA, found in Escherichia coli O157:H7.